The primary structure comprises 353 residues: MKFALTGGGTGGHLSIAKALAIELEKQGIEAIYLGSTYGQDKEWFENSPLFSERYFFNTQGVVNKSFFKKIGSLFLQAKAAFKAKEILKKHQITHTISVGGFSAGPASFASLLNKIPLYIHEQNAIKGSLNRYLSPKAKAVFSSYAFKDKGNHVLTSYPVQNAFFDFARTRTEIKHILFLGGSQGAKAINEFALLNAPKLTKQGIKITHICGPNSYEQVRFFYQELGLLDKIELFAFHNNITEIMHRADLCVSRAGASSVWELCANGLPTIFIPYPFASNNHQYYNVLEFEKENLCYVVPQNELLPKKLFEVIRKLNQKDDQGNKNLTTISNQLQQKIAKDGAKTIIETILSA.

UDP-N-acetyl-alpha-D-glucosamine contacts are provided by residues 10-12 (TGG), N124, S183, and Q283.

The protein belongs to the glycosyltransferase 28 family. MurG subfamily.

The protein resides in the cell inner membrane. The catalysed reaction is di-trans,octa-cis-undecaprenyl diphospho-N-acetyl-alpha-D-muramoyl-L-alanyl-D-glutamyl-meso-2,6-diaminopimeloyl-D-alanyl-D-alanine + UDP-N-acetyl-alpha-D-glucosamine = di-trans,octa-cis-undecaprenyl diphospho-[N-acetyl-alpha-D-glucosaminyl-(1-&gt;4)]-N-acetyl-alpha-D-muramoyl-L-alanyl-D-glutamyl-meso-2,6-diaminopimeloyl-D-alanyl-D-alanine + UDP + H(+). Its pathway is cell wall biogenesis; peptidoglycan biosynthesis. Functionally, cell wall formation. Catalyzes the transfer of a GlcNAc subunit on undecaprenyl-pyrophosphoryl-MurNAc-pentapeptide (lipid intermediate I) to form undecaprenyl-pyrophosphoryl-MurNAc-(pentapeptide)GlcNAc (lipid intermediate II). The protein is UDP-N-acetylglucosamine--N-acetylmuramyl-(pentapeptide) pyrophosphoryl-undecaprenol N-acetylglucosamine transferase of Helicobacter pylori (strain ATCC 700392 / 26695) (Campylobacter pylori).